A 413-amino-acid chain; its full sequence is Multifunctional CCA protein (413 aa).

Residues G8 and R11 each contribute to the ATP site. Residues G8 and R11 each coordinate CTP. Mg(2+) contacts are provided by D21 and D23. R91, R137, and R140 together coordinate ATP. CTP is bound by residues R91, R137, and R140. One can recognise an HD domain in the interval 228-329; the sequence is TGKHTLLSLK…VSLFDKGDFW (102 aa).

This sequence belongs to the tRNA nucleotidyltransferase/poly(A) polymerase family. Bacterial CCA-adding enzyme type 1 subfamily. As to quaternary structure, monomer. Can also form homodimers and oligomers. It depends on Mg(2+) as a cofactor. Ni(2+) is required as a cofactor.

The enzyme catalyses a tRNA precursor + 2 CTP + ATP = a tRNA with a 3' CCA end + 3 diphosphate. The catalysed reaction is a tRNA with a 3' CCA end + 2 CTP + ATP = a tRNA with a 3' CCACCA end + 3 diphosphate. Its function is as follows. Catalyzes the addition and repair of the essential 3'-terminal CCA sequence in tRNAs without using a nucleic acid template. Adds these three nucleotides in the order of C, C, and A to the tRNA nucleotide-73, using CTP and ATP as substrates and producing inorganic pyrophosphate. tRNA 3'-terminal CCA addition is required both for tRNA processing and repair. Also involved in tRNA surveillance by mediating tandem CCA addition to generate a CCACCA at the 3' terminus of unstable tRNAs. While stable tRNAs receive only 3'-terminal CCA, unstable tRNAs are marked with CCACCA and rapidly degraded. This chain is Multifunctional CCA protein, found in Shewanella denitrificans (strain OS217 / ATCC BAA-1090 / DSM 15013).